We begin with the raw amino-acid sequence, 594 residues long: Probable Xaa-Pro aminopeptidase P (594 aa).

Residues aspartate 391, aspartate 402, glutamate 500, and glutamate 514 each contribute to the Mn(2+) site.

This sequence belongs to the peptidase M24B family. Mn(2+) serves as cofactor.

It carries out the reaction Release of any N-terminal amino acid, including proline, that is linked to proline, even from a dipeptide or tripeptide.. Functionally, catalyzes the removal of a penultimate prolyl residue from the N-termini of peptides. This chain is Probable Xaa-Pro aminopeptidase P (ampp), found in Pyrenophora tritici-repentis (strain Pt-1C-BFP) (Wheat tan spot fungus).